We begin with the raw amino-acid sequence, 808 residues long: Probable mannosyl-oligosaccharide glucosidase (808 aa).

Residues 1–11 (MVSDMLGGNKR) are Cytoplasmic-facing. Residues 12–31 (WILFGLLSFLLNCVLVSCSV) traverse the membrane as a helical; Signal-anchor for type II membrane protein segment. Residues 32-808 (EDIEKAANDS…LVVNIMSENY (777 aa)) lie on the Lumenal side of the membrane. A glycan (N-linked (GlcNAc...) asparagine) is linked at Asn-39. Residue Asp-580 is the Proton donor of the active site. The Proton acceptor role is filled by Glu-778.

This sequence belongs to the glycosyl hydrolase 63 family.

It localises to the endoplasmic reticulum membrane. The enzyme catalyses N(4)-(alpha-D-Glc-(1-&gt;2)-alpha-D-Glc-(1-&gt;3)-alpha-D-Glc-(1-&gt;3)-alpha-D-Man-(1-&gt;2)-alpha-D-Man-(1-&gt;2)-alpha-D-Man-(1-&gt;3)-[alpha-D-Man-(1-&gt;2)-alpha-D-Man-(1-&gt;3)-[alpha-D-Man-(1-&gt;2)-alpha-D-Man-(1-&gt;6)]-alpha-D-Man-(1-&gt;6)]-beta-D-Man-(1-&gt;4)-beta-D-GlcNAc-(1-&gt;4)-beta-D-GlcNAc)-L-asparaginyl-[protein] + H2O = N(4)-(alpha-D-Glc-(1-&gt;3)-alpha-D-Glc-(1-&gt;3)-alpha-D-Man-(1-&gt;2)-alpha-D-Man-(1-&gt;2)-alpha-D-Man-(1-&gt;3)-[alpha-D-Man-(1-&gt;2)-alpha-D-Man-(1-&gt;3)-[alpha-D-Man-(1-&gt;2)-alpha-D-Man-(1-&gt;6)]-alpha-D-Man-(1-&gt;6)]-beta-D-Man-(1-&gt;4)-beta-D-GlcNAc-(1-&gt;4)-beta-D-GlcNAc)-L-asparaginyl-[protein] + beta-D-glucose. Functionally, cleaves the distal alpha 1,2-linked glucose residue from the Glc(3)Man(9)GlcNAc(2) oligosaccharide precursor highly specifically. The protein is Probable mannosyl-oligosaccharide glucosidase of Schizosaccharomyces pombe (strain 972 / ATCC 24843) (Fission yeast).